Here is a 259-residue protein sequence, read N- to C-terminus: Hydroxyacylglutathione hydrolase (259 aa).

Zn(2+) is bound by residues H56, H58, D60, H61, H112, D133, and H171.

The protein belongs to the metallo-beta-lactamase superfamily. Glyoxalase II family. As to quaternary structure, monomer. It depends on Zn(2+) as a cofactor.

It catalyses the reaction an S-(2-hydroxyacyl)glutathione + H2O = a 2-hydroxy carboxylate + glutathione + H(+). It participates in secondary metabolite metabolism; methylglyoxal degradation; (R)-lactate from methylglyoxal: step 2/2. Thiolesterase that catalyzes the hydrolysis of S-D-lactoyl-glutathione to form glutathione and D-lactic acid. In Pseudomonas putida (strain ATCC 700007 / DSM 6899 / JCM 31910 / BCRC 17059 / LMG 24140 / F1), this protein is Hydroxyacylglutathione hydrolase.